Consider the following 297-residue polypeptide: Large ribosomal subunit protein uL18 (297 aa).

Belongs to the universal ribosomal protein uL18 family. Component of the large ribosomal subunit (LSU).

It localises to the cytoplasm. The protein resides in the nucleus. Its function is as follows. Component of the ribosome, a large ribonucleoprotein complex responsible for the synthesis of proteins in the cell. The small ribosomal subunit (SSU) binds messenger RNAs (mRNAs) and translates the encoded message by selecting cognate aminoacyl-transfer RNA (tRNA) molecules. The large subunit (LSU) contains the ribosomal catalytic site termed the peptidyl transferase center (PTC), which catalyzes the formation of peptide bonds, thereby polymerizing the amino acids delivered by tRNAs into a polypeptide chain. The nascent polypeptides leave the ribosome through a tunnel in the LSU and interact with protein factors that function in enzymatic processing, targeting, and the membrane insertion of nascent chains at the exit of the ribosomal tunnel. The sequence is that of Large ribosomal subunit protein uL18 (RpL5) from Aedes aegypti (Yellowfever mosquito).